A 302-amino-acid polypeptide reads, in one-letter code: Ribonuclease HII (302 aa).

The RNase H type-2 domain occupies 53-297; it reads EFEIGVDEVG…VQQAIEGTLA (245 aa). 3 residues coordinate a divalent metal cation: D59, E60, and D163.

This sequence belongs to the RNase HII family. The cofactor is Mn(2+). Mg(2+) serves as cofactor.

It localises to the cytoplasm. The enzyme catalyses Endonucleolytic cleavage to 5'-phosphomonoester.. Functionally, endonuclease that specifically degrades the RNA of RNA-DNA hybrids. The sequence is that of Ribonuclease HII from Psychrobacter sp. (strain PRwf-1).